An 82-amino-acid chain; its full sequence is Protein C2 (82 aa).

The protein is Protein C2 (C2) of Sterkiella nova (Ciliate).